A 66-amino-acid chain; its full sequence is Large ribosomal subunit protein uL29 (66 aa).

This sequence belongs to the universal ribosomal protein uL29 family.

In Rhizobium rhizogenes (strain K84 / ATCC BAA-868) (Agrobacterium radiobacter), this protein is Large ribosomal subunit protein uL29.